The chain runs to 397 residues: Ribosomal RNA large subunit methyltransferase I (397 aa).

In terms of domain architecture, PUA spans 2 to 81 (STTVYLQKDR…EQIDTEFFVR (80 aa)).

Belongs to the methyltransferase superfamily. RlmI family.

It is found in the cytoplasm. It catalyses the reaction cytidine(1962) in 23S rRNA + S-adenosyl-L-methionine = 5-methylcytidine(1962) in 23S rRNA + S-adenosyl-L-homocysteine + H(+). Its function is as follows. Specifically methylates the cytosine at position 1962 (m5C1962) of 23S rRNA. The sequence is that of Ribosomal RNA large subunit methyltransferase I from Tolumonas auensis (strain DSM 9187 / NBRC 110442 / TA 4).